We begin with the raw amino-acid sequence, 43 residues long: Protein PsbN (43 aa).

Residues 5–27 (TLVAISISGSLVSFTGYALYTAF) form a helical membrane-spanning segment.

It belongs to the PsbN family.

The protein resides in the plastid. Its subcellular location is the chloroplast thylakoid membrane. May play a role in photosystem I and II biogenesis. The polypeptide is Protein PsbN (Drimys granadensis).